The chain runs to 190 residues: Dynactin subunit 6 (190 aa).

Position 186 is a phosphothreonine (threonine 186).

This sequence belongs to the dynactin subunits 5/6 family. Dynactin subunit 6 subfamily. Subunit of dynactin, a multiprotein complex part of a tripartite complex with dynein and a adapter, such as BICDL1, BICD2 or HOOK3. The dynactin complex is built around ACTR1A/ACTB filament and consists of an actin-related filament composed of a shoulder domain, a pointed end and a barbed end. Its length is defined by its flexible shoulder domain. The soulder is composed of 2 DCTN1 subunits, 4 DCTN2 and 2 DCTN3. The 4 DCNT2 (via N-terminus) bind the ACTR1A filament and act as molecular rulers to determine the length. The pointed end is important for binding dynein-dynactin cargo adapters. Consists of 4 subunits: ACTR10, DCNT4, DCTN5 and DCTN6. Within the complex DCTN6 forms a heterodimer with DCTN5. The barbed end is composed of a CAPZA1:CAPZB heterodimers, which binds ACTR1A/ACTB filament and dynactin and stabilizes dynactin. Interacts with PLK1. Interacts with N4BP2L1. Post-translationally, phosphorylation at Thr-186 by CDK1 during mitotic prometaphase creates a binding site for PLK1 that facilitates its recruitment to kinetochores.

The protein localises to the cytoplasm. Its subcellular location is the cytoskeleton. It is found in the chromosome. It localises to the centromere. The protein resides in the kinetochore. Its function is as follows. Part of the dynactin complex that activates the molecular motor dynein for ultra-processive transport along microtubules. This chain is Dynactin subunit 6 (DCTN6), found in Sus scrofa (Pig).